The chain runs to 295 residues: Mitochondrial dicarboxylate transporter (295 aa).

Solcar repeat units follow at residues 4-88, 96-188, and 198-286; these read KQVK…LKEH, TNMW…FKNF, and KKNS…LKKY. 6 helical membrane passes run 8–24, 63–82, 98–122, 163–182, 204–224, and 262–280; these read YPWWYGGAAGIFAVMNT, GLSASLLRQCTYTTARFGMY, MWYLLGASMVSGALGGLAGNFADLI, GWKPNMVRGVLMTASQVVTY, LTSSLLAGFVATTVCSPADVI, and WVPSFTRLAPFTMLIFFAM.

Belongs to the mitochondrial carrier (TC 2.A.29) family. Homodimer.

The protein localises to the mitochondrion inner membrane. Mitochondrial dicarboxylic transporter catalyzing the exchange of dicarboxylic acids like malate and succinate for inorganic phosphate. Required for growth on ethanol and acetate. The protein is Mitochondrial dicarboxylate transporter (DIC1) of Candida glabrata (strain ATCC 2001 / BCRC 20586 / JCM 3761 / NBRC 0622 / NRRL Y-65 / CBS 138) (Yeast).